The sequence spans 931 residues: Protein phosphatase 1 regulatory subunit 37 homolog (931 aa).

The interval 20–71 (TAASSPASPIPPTSPSMFATPPHQQSHSSATSVRKKVCQEANSSADDPDSDA) is disordered. Residues 41–51 (PHQQSHSSATS) are compositionally biased toward polar residues. 8 LRR repeats span residues 232–259 (AISL…LARA), 262–285 (SASL…VLIC), 290–314 (NTGI…IYQL), 323–346 (LLDL…LRNR), 351–374 (KSAL…SLAE), 379–407 (NTKI…LVSN), 409–430 (HLHR…ILAE), and 435–458 (NTAL…ALHS). The segment covering 519–533 (QDHVSEDTEKENKDA) has biased composition (basic and acidic residues). Disordered stretches follow at residues 519–602 (QDHV…RHQR) and 780–807 (PDCT…IRQR). Acidic residues predominate over residues 534 to 547 (DNDDKEPENEDGDT). Over residues 554–563 (SDASADQSDS) the composition is skewed to low complexity. 2 stretches are compositionally biased toward basic and acidic residues: residues 564–584 (PADK…EKRP) and 790–807 (TTSR…IRQR).

Belongs to the PPP1R37 family.

The protein is Protein phosphatase 1 regulatory subunit 37 homolog of Caenorhabditis briggsae.